Here is a 445-residue protein sequence, read N- to C-terminus: N-succinylarginine dihydrolase (445 aa).

Residues 19 to 28 (AGLSFGNVAS), asparagine 110, and 137 to 138 (HR) each bind substrate. Glutamate 174 is an active-site residue. Position 214 (arginine 214) interacts with substrate. Histidine 250 is an active-site residue. Substrate is bound by residues aspartate 252 and asparagine 363. Catalysis depends on cysteine 369, which acts as the Nucleophile.

Belongs to the succinylarginine dihydrolase family. As to quaternary structure, homodimer.

The enzyme catalyses N(2)-succinyl-L-arginine + 2 H2O + 2 H(+) = N(2)-succinyl-L-ornithine + 2 NH4(+) + CO2. The protein operates within amino-acid degradation; L-arginine degradation via AST pathway; L-glutamate and succinate from L-arginine: step 2/5. Catalyzes the hydrolysis of N(2)-succinylarginine into N(2)-succinylornithine, ammonia and CO(2). This chain is N-succinylarginine dihydrolase, found in Shewanella woodyi (strain ATCC 51908 / MS32).